A 284-amino-acid polypeptide reads, in one-letter code: Parvulin-like PPIase (284 aa).

An N-terminal signal peptide occupies residues 1 to 20 (MKKLSIVLLSVSMLSSIAFA). The PpiC domain occupies 139-232 (KEQIKVAHIL…YGWHIIKVLE (94 aa)).

Belongs to the PpiC/parvulin rotamase family.

The protein resides in the cell outer membrane. It catalyses the reaction [protein]-peptidylproline (omega=180) = [protein]-peptidylproline (omega=0). The protein is Parvulin-like PPIase (plp) of Rickettsia bellii (strain RML369-C).